The chain runs to 256 residues: Thiazole synthase (256 aa).

The active-site Schiff-base intermediate with DXP is K96. 1-deoxy-D-xylulose 5-phosphate-binding positions include G157, A184–G185, and N206–T207.

This sequence belongs to the ThiG family. Homotetramer. Forms heterodimers with either ThiH or ThiS.

It localises to the cytoplasm. It catalyses the reaction [ThiS sulfur-carrier protein]-C-terminal-Gly-aminoethanethioate + 2-iminoacetate + 1-deoxy-D-xylulose 5-phosphate = [ThiS sulfur-carrier protein]-C-terminal Gly-Gly + 2-[(2R,5Z)-2-carboxy-4-methylthiazol-5(2H)-ylidene]ethyl phosphate + 2 H2O + H(+). It participates in cofactor biosynthesis; thiamine diphosphate biosynthesis. In terms of biological role, catalyzes the rearrangement of 1-deoxy-D-xylulose 5-phosphate (DXP) to produce the thiazole phosphate moiety of thiamine. Sulfur is provided by the thiocarboxylate moiety of the carrier protein ThiS. In vitro, sulfur can be provided by H(2)S. The chain is Thiazole synthase from Bartonella tribocorum (strain CIP 105476 / IBS 506).